The sequence spans 559 residues: Tissue-type plasminogen activator (559 aa).

Residues 1–17 form the signal peptide; sequence MKRELLCVLLLCGLAFP. A propeptide spanning residues 18–29 is cleaved from the precursor; that stretch reads LPDQGIHGRFRR. Positions 30 to 32 are cleaved as a propeptide — removed by plasmin; the sequence is GAR. Residues 36-78 enclose the Fibronectin type-I domain; it reads ATCRDEPTQTTYQQHQSWLRPMLRSSRVEYCRCNSGLVQCHSV. 17 disulfides stabilise this stretch: Cys-38–Cys-68, Cys-66–Cys-75, Cys-83–Cys-94, Cys-88–Cys-105, Cys-107–Cys-116, Cys-124–Cys-205, Cys-145–Cys-187, Cys-176–Cys-200, Cys-213–Cys-294, Cys-234–Cys-276, Cys-265–Cys-289, Cys-297–Cys-428, Cys-340–Cys-356, Cys-348–Cys-417, Cys-442–Cys-516, Cys-474–Cys-490, and Cys-506–Cys-534. The important for binding to annexin A2 stretch occupies residues 39-49; the sequence is RDEPTQTTYQQ. The EGF-like domain occupies 79 to 117; the sequence is PVRSCSEPRCFNGGTCQQALYFSDFVCQCPDGFVGKRCD. Kringle domains follow at residues 124 to 205 and 213 to 294; these read CFEE…TPAC and CYVG…MSPC. Asn-149 is a glycosylation site (N-linked (GlcNAc...) asparagine). Positions 309 to 558 constitute a Peptidase S1 domain; sequence IKGGLYTDIT…YLDWIHDNMK (250 aa). Active-site charge relay system residues include His-355 and Asp-404. Asn-481 carries N-linked (GlcNAc...) asparagine glycosylation. The active-site Charge relay system is Ser-510.

It belongs to the peptidase S1 family. Heterodimer of chain A and chain B held by a disulfide bond. Binds to fibrin with high affinity. This interaction leads to an increase in the catalytic efficiency of the enzyme due to an increase in affinity for plasminogen. Similarly, binding to heparin increases the activation of plasminogen. Binds to annexin A2, cytokeratin-8, fibronectin and laminin. Binds to mannose receptor and the low-density lipoprotein receptor-related protein (LRP1); these proteins are involved in TPA clearance. Binds LRP1B; binding is followed by internalization and degradation. Forms heterodimer with SERPINA5. Interacts with SERPINE1. In complex with SERPINE1, interacts with SORL1. In terms of processing, the single chain, almost fully active enzyme, can be further processed into a two-chain fully active form by a cleavage after Arg-308 catalyzed by plasmin, tissue kallikrein or factor Xa.

The protein resides in the secreted. It localises to the extracellular space. The enzyme catalyses Specific cleavage of Arg-|-Val bond in plasminogen to form plasmin.. Inhibited by SERPINA5. Inhibited by SERPINE1. Converts the abundant, but inactive, zymogen plasminogen to plasmin by hydrolyzing a single Arg-Val bond in plasminogen. By controlling plasmin-mediated proteolysis, it plays an important role in tissue remodeling and degradation, in cell migration and many other physiopathological events. During oocyte activation, plays a role in cortical granule reaction in the zona reaction, which contributes to the block to polyspermy. This chain is Tissue-type plasminogen activator (Plat), found in Mus musculus (Mouse).